The primary structure comprises 711 residues: Retrovirus-related Pol polyprotein from type-1 retrotransposable element R2 (711 aa).

The Reverse transcriptase domain occupies 45-323 (LHLLRGHVPT…QTFRYLGHFF (279 aa)). The tract at residues 444–711 (LFSCPSFDHL…RAVWSRQAGA (268 aa)) is nucleic acid-binding endonuclease.

The catalysed reaction is DNA(n) + a 2'-deoxyribonucleoside 5'-triphosphate = DNA(n+1) + diphosphate. The chain is Retrovirus-related Pol polyprotein from type-1 retrotransposable element R2 from Popillia japonica (Japanese beetle).